Reading from the N-terminus, the 419-residue chain is UPF0761 membrane protein ACIAD3168 (419 aa).

Transmembrane regions (helical) follow at residues 42–62 (ALTY…LVII), 105–125 (LTVI…STIE), 148–168 (WTII…SSTV), 186–206 (AFIL…ILYW), 212–232 (TVPM…FELL), and 252–272 (AFAA…IVLL).

The protein belongs to the UPF0761 family.

Its subcellular location is the cell inner membrane. The sequence is that of UPF0761 membrane protein ACIAD3168 from Acinetobacter baylyi (strain ATCC 33305 / BD413 / ADP1).